A 354-amino-acid chain; its full sequence is Dihydroorotate dehydrogenase (quinone) (354 aa).

FMN-binding positions include 61 to 65 (AGYDK) and alanine 85. Lysine 65 contacts substrate. 110 to 114 (NRFGF) serves as a coordination point for substrate. FMN-binding residues include asparagine 139 and asparagine 170. Asparagine 170 serves as a coordination point for substrate. The Nucleophile role is filled by serine 173. Asparagine 175 lines the substrate pocket. Lysine 211 and threonine 239 together coordinate FMN. 240-241 (NT) is a substrate binding site. FMN is bound by residues glycine 261, glycine 290, and 311-312 (YT).

The protein belongs to the dihydroorotate dehydrogenase family. Type 2 subfamily. As to quaternary structure, monomer. FMN is required as a cofactor.

It localises to the cell membrane. It catalyses the reaction (S)-dihydroorotate + a quinone = orotate + a quinol. It participates in pyrimidine metabolism; UMP biosynthesis via de novo pathway; orotate from (S)-dihydroorotate (quinone route): step 1/1. Catalyzes the conversion of dihydroorotate to orotate with quinone as electron acceptor. In Cereibacter sphaeroides (strain KD131 / KCTC 12085) (Rhodobacter sphaeroides), this protein is Dihydroorotate dehydrogenase (quinone).